A 295-amino-acid chain; its full sequence is MLIEFTKMHGLGNDFMVIDLVTQRLDLTKDLVQLLGDRHLGIGFDQLLVVEPPMRPDVDFSYRIFNTDGTEVEQCGNGARCFARFVQARKLSFKQRLRVETASGIISLTTDHYGWVEVDMGKPKFEPSEIPFTPRATTKIQNAYHLDVNGTPVQLYVANMGNPHAVIKVDDVLDADVESLGRAIESHPAFPERVNVGFMQVMNQRHIRLRVYERGVGETQACGTGACAAVAIGIREGWLDEGEDVRAQLYGGSMVIKWQPGYSVMMTGPTAFVYEGVFSPDGLMAQAGIKPNPEI.

The substrate site is built by Asn-13, Gln-46, and Asn-66. The active-site Proton donor is the Cys-75. Substrate contacts are provided by residues 76–77 (GN), Asn-162, Asn-195, and 213–214 (ER). The Proton acceptor role is filled by Cys-222. 223–224 (GT) contacts substrate.

This sequence belongs to the diaminopimelate epimerase family. Homodimer.

The protein localises to the cytoplasm. It carries out the reaction (2S,6S)-2,6-diaminopimelate = meso-2,6-diaminopimelate. It participates in amino-acid biosynthesis; L-lysine biosynthesis via DAP pathway; DL-2,6-diaminopimelate from LL-2,6-diaminopimelate: step 1/1. Catalyzes the stereoinversion of LL-2,6-diaminopimelate (L,L-DAP) to meso-diaminopimelate (meso-DAP), a precursor of L-lysine and an essential component of the bacterial peptidoglycan. The chain is Diaminopimelate epimerase from Psychrobacter arcticus (strain DSM 17307 / VKM B-2377 / 273-4).